The primary structure comprises 253 residues: Methionine aminopeptidase (253 aa).

H78 is a substrate binding site. A divalent metal cation-binding residues include D95, D106, and H169. H176 is a substrate binding site. The a divalent metal cation site is built by E206 and E237.

The protein belongs to the peptidase M24A family. Methionine aminopeptidase type 1 subfamily. In terms of assembly, monomer. Co(2+) is required as a cofactor. The cofactor is Zn(2+). Mn(2+) serves as cofactor. Requires Fe(2+) as cofactor.

The enzyme catalyses Release of N-terminal amino acids, preferentially methionine, from peptides and arylamides.. Functionally, removes the N-terminal methionine from nascent proteins. The N-terminal methionine is often cleaved when the second residue in the primary sequence is small and uncharged (Met-Ala-, Cys, Gly, Pro, Ser, Thr, or Val). Requires deformylation of the N(alpha)-formylated initiator methionine before it can be hydrolyzed. The polypeptide is Methionine aminopeptidase (Helicobacter pylori (strain J99 / ATCC 700824) (Campylobacter pylori J99)).